A 720-amino-acid chain; its full sequence is Pro-neuregulin-3, membrane-bound isoform (720 aa).

Residues 1 to 360 (MSEGAAAASP…MESEEVYQRQ (360 aa)) are Extracellular-facing. Disordered regions lie at residues 28–48 (AAAAAAAGGGPDGGGEGAAEP), 119–223 (SSFP…AMPS), and 246–280 (PFQDAASSSSSSSSSATTTTPETSTSPKFHTTTYS). Positions 34 to 44 (AGGGPDGGGEG) are enriched in gly residues. Residues 127-148 (TTTTTTSTTSPATPSAGGAASS) are compositionally biased toward low complexity. Positions 149–163 (RTPNRISTRLTTITR) are enriched in polar residues. Composition is skewed to low complexity over residues 187 to 205 (TAAPATVPSTTAPFFSSST) and 250 to 271 (AASSSSSSSSSATTTTPETSTS). The region spanning 286–329 (HFKPCRDKDLAYCLNDGECFVIETLTGSHKHCRCKEGYQGVRCD) is the EGF-like domain. 3 disulfide bridges follow: Cys290–Cys304, Cys298–Cys317, and Cys319–Cys328. Residues 361 to 381 (VLSISCIIFGIVIVGMFCAAF) traverse the membrane as a helical segment. Over 382 to 720 (YFKSKKQAKQ…EIQRDSALTK (339 aa)) the chain is Cytoplasmic. Positions 451 to 481 (PQSFPEVPSPDRGSQSVKHHRSLSSCCSPGQ) are disordered.

This sequence belongs to the neuregulin family. Interacts with ERBB4. In terms of processing, proteolytic cleavage close to the plasma membrane on the external face leads to the release of the soluble growth factor form. Post-translationally, extensive glycosylation precedes the proteolytic cleavage. Isoform 3 is glycosylated. In terms of tissue distribution, highly expressed in most regions of the brain with the exception of corpus callosum. Expressed at lower level in testis. Not detected in heart, placenta, lung, liver, skeletal muscle, kidney, pancreas, spleen, thymus, prostate, ovary, small intestine, colon and peripheral blood leukocytes.

The protein resides in the cell membrane. It localises to the secreted. Functionally, direct ligand for the ERBB4 tyrosine kinase receptor. Binding results in ligand-stimulated tyrosine phosphorylation and activation of the receptor. Does not bind to the EGF receptor, ERBB2 or ERBB3 receptors. May be a survival factor for oligodendrocytes. This Homo sapiens (Human) protein is Pro-neuregulin-3, membrane-bound isoform (NRG3).